The primary structure comprises 85 residues: uncharacterized protein (85 aa).

This is an uncharacterized protein from Bacillus subtilis (strain 168).